A 177-amino-acid chain; its full sequence is Peptide methionine sulfoxide reductase MsrA (177 aa).

Cysteine 11 is an active-site residue.

This sequence belongs to the MsrA Met sulfoxide reductase family.

The catalysed reaction is L-methionyl-[protein] + [thioredoxin]-disulfide + H2O = L-methionyl-(S)-S-oxide-[protein] + [thioredoxin]-dithiol. The enzyme catalyses [thioredoxin]-disulfide + L-methionine + H2O = L-methionine (S)-S-oxide + [thioredoxin]-dithiol. Its function is as follows. Has an important function as a repair enzyme for proteins that have been inactivated by oxidation. Catalyzes the reversible oxidation-reduction of methionine sulfoxide in proteins to methionine. This chain is Peptide methionine sulfoxide reductase MsrA, found in Trichodesmium erythraeum (strain IMS101).